Here is a 203-residue protein sequence, read N- to C-terminus: ER membrane protein complex subunit 8/9 homolog (203 aa).

An MPN domain is found at 4–140 (YKVSERAYAK…IQVFNCPGDS (137 aa)).

This sequence belongs to the EMC8/EMC9 family. Component of the ER membrane protein complex (EMC).

It is found in the endoplasmic reticulum membrane. Part of the endoplasmic reticulum membrane protein complex (EMC) that enables the energy-independent insertion into endoplasmic reticulum membranes of newly synthesized multi-pass membrane proteins like rhodopsins. The polypeptide is ER membrane protein complex subunit 8/9 homolog (Drosophila melanogaster (Fruit fly)).